Consider the following 314-residue polypeptide: Olfactory receptor 1E1 (314 aa).

Residues 1–25 (MMGQNQTSISDFLLLGLPIQPEQQN) lie on the Extracellular side of the membrane. An N-linked (GlcNAc...) asparagine glycan is attached at N5. The helical transmembrane segment at 26-49 (LCYALFLAMYLTTLLGNLLIIVLI) threads the bilayer. Residues 50–57 (RLDSHLHT) are Cytoplasmic-facing. A helical membrane pass occupies residues 58-79 (PMYLFLSNLSFSDLCFSSVTIP). Residues 80 to 100 (KLLQNMQNQDPSIPYADCLTQ) lie on the Extracellular side of the membrane. C97 and C189 are oxidised to a cystine. The helical transmembrane segment at 101–120 (MYFFLLFGDLESFLLVAMAY) threads the bilayer. The Cytoplasmic segment spans residues 121-139 (DRYVAICFPLHYTAIMSPM). The helical transmembrane segment at 140–158 (LCLSVVALSWVLTTFHAML) threads the bilayer. Residues 159–195 (HTLLMARLCFCADNVIPHFFCDMSALLKLACSDTRVN) lie on the Extracellular side of the membrane. Residues 196–219 (EWVIFIMGGLILVIPFLLILGSYA) traverse the membrane as a helical segment. Residues 220-236 (RIVSSILKVPSSKGICK) are Cytoplasmic-facing. The helical transmembrane segment at 237-259 (ALSTCGSHLSVVSLFYGTVIGLY) threads the bilayer. Residues 260–272 (LCPSANSSTLKDT) lie on the Extracellular side of the membrane. The helical transmembrane segment at 273-292 (VMAMIYTVVTPMLNPFIYSL) threads the bilayer. Over 293–314 (RNRDMKGALSRVIHQKKTFFSL) the chain is Cytoplasmic.

It belongs to the G-protein coupled receptor 1 family.

Its subcellular location is the cell membrane. Functionally, odorant receptor. The protein is Olfactory receptor 1E1 (OR1E1) of Pan troglodytes (Chimpanzee).